A 334-amino-acid polypeptide reads, in one-letter code: L-lactate dehydrogenase B chain (334 aa).

30–58 (GQVGMACAVSVLLKELADELALVDILEDK) lines the NAD(+) pocket. Substrate-binding residues include arginine 107, asparagine 139, and arginine 170. Asparagine 139 contacts NAD(+). Histidine 194 serves as the catalytic Proton acceptor. Position 249 (threonine 249) interacts with substrate.

The protein belongs to the LDH/MDH superfamily. LDH family. Homotetramer.

It is found in the cytoplasm. The catalysed reaction is (S)-lactate + NAD(+) = pyruvate + NADH + H(+). It functions in the pathway fermentation; pyruvate fermentation to lactate; (S)-lactate from pyruvate: step 1/1. Functionally, interconverts simultaneously and stereospecifically pyruvate and lactate with concomitant interconversion of NADH and NAD(+). This Xenopus laevis (African clawed frog) protein is L-lactate dehydrogenase B chain (ldhb).